The primary structure comprises 422 residues: Phthiocerol/phthiodiolone dimycocerosyl transferase (422 aa).

H124 serves as the catalytic Proton acceptor.

This sequence belongs to the acyltransferase PapA5 family. As to quaternary structure, monomer. Interacts directly with the acyl carrier protein (ACP) domain of the mycocerosic acid synthase (mas) protein.

The enzyme catalyses 2 a mycocerosyl-[mycocerosic acid synthase] + a phthiocerol = a dimycocerosyl phthiocerol + 2 holo-[mycocerosic acid synthase].. It carries out the reaction 2 a mycocerosyl-[mycocerosic acid synthase] + a phthiodiolone = a dimycocerosyl phthiodiolone + 2 holo-[mycocerosic acid synthase].. It catalyses the reaction 2 a mycocerosyl-[mycocerosic acid synthase] + a phenolphthiocerol = a dimycocerosyl phenolphthiocerol + 2 holo-[mycocerosic acid synthase].. In terms of biological role, catalyzes diesterification of phthiocerol, phthiodiolone, and phenolphthiocerol with mycocerosic acids, the final step in the phthiocerol, phthiodiolone and phenolphthiocerol dimycocerosate esters (PDIM) synthesis. Can directly transfer the mycocerosate bound to the mycocerosic acid synthase (mas) onto the substrate alcohols. The protein is Phthiocerol/phthiodiolone dimycocerosyl transferase (papA5) of Mycobacterium tuberculosis (strain ATCC 25177 / H37Ra).